Reading from the N-terminus, the 466-residue chain is Cysteine--tRNA ligase (466 aa).

Cysteine 28 is a Zn(2+) binding site. Positions 30 to 40 (PTVYNFFHIGN) match the 'HIGH' region motif. Zn(2+) contacts are provided by cysteine 208, histidine 233, and glutamate 237. A 'KMSKS' region motif is present at residues 265–269 (KMSKS). Lysine 268 is an ATP binding site.

It belongs to the class-I aminoacyl-tRNA synthetase family. As to quaternary structure, monomer. Zn(2+) serves as cofactor.

The protein localises to the cytoplasm. It catalyses the reaction tRNA(Cys) + L-cysteine + ATP = L-cysteinyl-tRNA(Cys) + AMP + diphosphate. The sequence is that of Cysteine--tRNA ligase from Clostridium perfringens (strain ATCC 13124 / DSM 756 / JCM 1290 / NCIMB 6125 / NCTC 8237 / Type A).